We begin with the raw amino-acid sequence, 259 residues long: TCF3 fusion partner homolog (259 aa).

Disordered stretches follow at residues 51 to 72 and 141 to 210; these read GLGD…GRRR and EDDG…APVQ. Residue Ser-167 is modified to Phosphoserine. Thr-172 carries the post-translational modification Phosphothreonine. A phosphoserine mark is found at Ser-180 and Ser-188. Phosphothreonine is present on Thr-203. Lys-222 is covalently cross-linked (Glycyl lysine isopeptide (Lys-Gly) (interchain with G-Cter in SUMO2)). Residues 240 to 259 form a disordered region; it reads VSRGPDKLLPYPTLASPPFD. Ser-255 carries the post-translational modification Phosphoserine.

Interacts with NOL3; translocates NOL3 into the nucleus and negatively regulated TFPT-induced cell death. Component of the chromatin remodeling INO80 complex; specifically part of a complex module associated with the N-terminus of INO80. As to expression, ubiquitously expressed. Abundant in the brain.

It is found in the nucleus. Appears to promote apoptosis in a p53/TP53-independent manner. In terms of biological role, putative regulatory component of the chromatin remodeling INO80 complex which is involved in transcriptional regulation, DNA replication and probably DNA repair. This Rattus norvegicus (Rat) protein is TCF3 fusion partner homolog (Tfpt).